Here is a 26-residue protein sequence, read N- to C-terminus: Halocyntin (26 aa).

Its function is as follows. Has strong antibacterial activity against the Gram-positive bacteria M.luteus, S.aureus, B.megaterium, A.viridans and E.faecalis, and against the Gram-negative bacterium K.pneumoniae. Has less potent antibacterial activity against the Gram-negative bacteria E.coli DH5alpha, S.typhimurium, P.aeruginosa, E.aerogenes and N.gonorrhoeae. Has moderate hemolytic activity against sheep erythrocytes. The sequence is that of Halocyntin from Halocynthia papillosa (Red sea-squirt).